A 135-amino-acid polypeptide reads, in one-letter code: Small ribosomal subunit protein bS16 (135 aa).

The span at 105–120 shows a compositional bias: basic and acidic residues; sequence DEKKKPVLKPKTEKAA. A disordered region spans residues 105–135; sequence DEKKKPVLKPKTEKAAPEAAAPEAEATEEQA.

It belongs to the bacterial ribosomal protein bS16 family.

In Clavibacter sepedonicus (Clavibacter michiganensis subsp. sepedonicus), this protein is Small ribosomal subunit protein bS16.